We begin with the raw amino-acid sequence, 1171 residues long: Kinesin-like protein GA13060 (1171 aa).

The tract at residues 1–24 is disordered; that stretch reads MASSISRNGGFCGALQRAPPPMPP. The Kinesin motor domain occupies 40–400; the sequence is KVKVMLRVSD…IQIASRIHRL (361 aa). Disordered stretches follow at residues 737–774, 798–820, 932–955, 1043–1099, and 1124–1143; these read LLGQ…GSRD, LVAS…SQRS, PAYR…SLPS, TSSE…QRHR, and RHSH…EGNG. The segment covering 805–816 has biased composition (basic residues); sequence SSHHQHQHHRPS. Residues 1043 to 1059 show a composition bias toward polar residues; the sequence is TSSEAYDSGHDSNSTPR. A compositionally biased stretch (basic residues) spans 1124–1139; it reads RHSHGVGGHKKHRHRH.

Belongs to the TRAFAC class myosin-kinesin ATPase superfamily. Kinesin family. KIF26 subfamily.

Its subcellular location is the cytoplasm. It localises to the cytoskeleton. This Drosophila pseudoobscura pseudoobscura (Fruit fly) protein is Kinesin-like protein GA13060.